Consider the following 65-residue polypeptide: Alpha-toxin BeM10 (65 aa).

The LCN-type CS-alpha/beta domain maps to 2–65; sequence RDGYIADDKD…IKQKVSGKCN (64 aa). 4 cysteine pairs are disulfide-bonded: Cys12–Cys64, Cys16–Cys35, Cys22–Cys45, and Cys26–Cys47.

Belongs to the long (4 C-C) scorpion toxin superfamily. Sodium channel inhibitor family. Alpha subfamily. In terms of tissue distribution, expressed by the venom gland.

The protein resides in the secreted. Its function is as follows. Alpha toxins bind voltage-independently at site-3 of sodium channels (Nav) and inhibit the inactivation of the activated channels, thereby blocking neuronal transmission. Has paralytic activity in mice. The protein is Alpha-toxin BeM10 of Mesobuthus eupeus (Lesser Asian scorpion).